We begin with the raw amino-acid sequence, 625 residues long: 1-deoxy-D-xylulose-5-phosphate synthase (625 aa).

Residues His-84 and 125 to 127 (GHS) each bind thiamine diphosphate. Mg(2+) is bound at residue Asp-156. Thiamine diphosphate is bound by residues 157–158 (GA), Asn-185, Phe-292, and Glu-373. Residue Asn-185 coordinates Mg(2+).

This sequence belongs to the transketolase family. DXPS subfamily. As to quaternary structure, homodimer. The cofactor is Mg(2+). It depends on thiamine diphosphate as a cofactor.

It carries out the reaction D-glyceraldehyde 3-phosphate + pyruvate + H(+) = 1-deoxy-D-xylulose 5-phosphate + CO2. It functions in the pathway metabolic intermediate biosynthesis; 1-deoxy-D-xylulose 5-phosphate biosynthesis; 1-deoxy-D-xylulose 5-phosphate from D-glyceraldehyde 3-phosphate and pyruvate: step 1/1. Functionally, catalyzes the acyloin condensation reaction between C atoms 2 and 3 of pyruvate and glyceraldehyde 3-phosphate to yield 1-deoxy-D-xylulose-5-phosphate (DXP). The protein is 1-deoxy-D-xylulose-5-phosphate synthase of Marinomonas sp. (strain MWYL1).